Consider the following 246-residue polypeptide: 2-C-methyl-D-erythritol 4-phosphate cytidylyltransferase (246 aa).

The protein belongs to the IspD/TarI cytidylyltransferase family. IspD subfamily.

It carries out the reaction 2-C-methyl-D-erythritol 4-phosphate + CTP + H(+) = 4-CDP-2-C-methyl-D-erythritol + diphosphate. The protein operates within isoprenoid biosynthesis; isopentenyl diphosphate biosynthesis via DXP pathway; isopentenyl diphosphate from 1-deoxy-D-xylulose 5-phosphate: step 2/6. In terms of biological role, catalyzes the formation of 4-diphosphocytidyl-2-C-methyl-D-erythritol from CTP and 2-C-methyl-D-erythritol 4-phosphate (MEP). This chain is 2-C-methyl-D-erythritol 4-phosphate cytidylyltransferase, found in Chlorobaculum tepidum (strain ATCC 49652 / DSM 12025 / NBRC 103806 / TLS) (Chlorobium tepidum).